A 675-amino-acid chain; its full sequence is Potassium-transporting ATPase ATP-binding subunit 2 (675 aa).

The next 4 helical transmembrane spans lie at 34–54 (IMFV…FPDI), 65–85 (LITI…SEAF), 216–236 (IALF…IVTL), and 245–265 (LILP…TTIG). The active-site 4-aspartylphosphate intermediate is the Asp304. ATP contacts are provided by residues Asp341, Glu345, 372–379 (FTAETRMS), and Lys390. Residues Asp513 and Asp517 each coordinate Mg(2+). The next 3 helical transmembrane spans lie at 569–591 (ALTT…ALMM), 611–631 (AIIS…PIAM), and 644–664 (IFIN…FLGI).

The protein belongs to the cation transport ATPase (P-type) (TC 3.A.3) family. Type IA subfamily. As to quaternary structure, the system is composed of three essential subunits: KdpA, KdpB and KdpC.

The protein localises to the cell membrane. The enzyme catalyses K(+)(out) + ATP + H2O = K(+)(in) + ADP + phosphate + H(+). Its function is as follows. Part of the high-affinity ATP-driven potassium transport (or Kdp) system, which catalyzes the hydrolysis of ATP coupled with the electrogenic transport of potassium into the cytoplasm. This subunit is responsible for energy coupling to the transport system and for the release of the potassium ions to the cytoplasm. The sequence is that of Potassium-transporting ATPase ATP-binding subunit 2 from Staphylococcus aureus (strain MRSA252).